The chain runs to 147 residues: Globin, major polymeric component P1 (147 aa).

One can recognise a Globin domain in the interval 2-146 (HLTADQVAAL…ISDACIAGLQ (145 aa)). A heme b-binding site is contributed by His96.

It belongs to the globin family. As to quaternary structure, polymer.

In Glycera dibranchiata (Bloodworm), this protein is Globin, major polymeric component P1.